The chain runs to 612 residues: Kelch repeat and BTB domain-containing protein 3 (612 aa).

In terms of domain architecture, BTB spans 52-119 (YDFKIIMKDE…AYTGKTKITD (68 aa)). One can recognise a BACK domain in the interval 150–250 (NLVNCLQLLS…VRLHQLSEET (101 aa)). 5 Kelch repeats span residues 291-337 (STTE…GSSL), 339-390 (SYGE…STMK), 400-450 (MALD…PEAS), 452-502 (CQNV…ATLI), and 548-595 (GIED…FYCQ).

The polypeptide is Kelch repeat and BTB domain-containing protein 3 (Pongo abelii (Sumatran orangutan)).